The following is a 435-amino-acid chain: UDP-N-acetylmuramate--L-alanine ligase (435 aa).

108 to 114 (GSHGKTS) lines the ATP pocket.

Belongs to the MurCDEF family.

Its subcellular location is the cytoplasm. It catalyses the reaction UDP-N-acetyl-alpha-D-muramate + L-alanine + ATP = UDP-N-acetyl-alpha-D-muramoyl-L-alanine + ADP + phosphate + H(+). Its pathway is cell wall biogenesis; peptidoglycan biosynthesis. Functionally, cell wall formation. The protein is UDP-N-acetylmuramate--L-alanine ligase of Exiguobacterium sp. (strain ATCC BAA-1283 / AT1b).